The primary structure comprises 1050 residues: Self-sufficient cytochrome P450 monooxygenase CYP505E5 (1050 aa).

Position 405 (Cys405) interacts with heme. The disordered stretch occupies residues 461-495; sequence TATGLSRRSMLVARDGSSEESSNHPAEARGDHAPA. One can recognise a Flavodoxin-like domain in the interval 500 to 641; the sequence is VSFFYGSNSG…DLEAWEETSL (142 aa). FMN is bound by residues 506–510 and 585–617; these read SNSGT and VFGC…TRLA. Residues 679–907 form the FAD-binding FR-type domain; sequence KGLIEAKVTA…RPAKETFHLP (229 aa).

It in the N-terminal section; belongs to the cytochrome P450 family. FAD is required as a cofactor. It depends on FMN as a cofactor. Heme serves as cofactor.

The catalysed reaction is 2 oxidized [cytochrome P450] + NADPH = 2 reduced [cytochrome P450] + NADP(+) + H(+). It catalyses the reaction an organic molecule + reduced [NADPH--hemoprotein reductase] + O2 = an alcohol + oxidized [NADPH--hemoprotein reductase] + H2O + H(+). It carries out the reaction dodecanoate + reduced [NADPH--hemoprotein reductase] + O2 = 5-hydroxydodecanoate + oxidized [NADPH--hemoprotein reductase] + H2O + H(+). The enzyme catalyses tetradecanoate + reduced [NADPH--hemoprotein reductase] + O2 = 7-hydroxytetradecanoate + oxidized [NADPH--hemoprotein reductase] + H2O + H(+). The catalysed reaction is dodecan-1-ol + reduced [NADPH--hemoprotein reductase] + O2 = 1,5-dodecanediol + oxidized [NADPH--hemoprotein reductase] + H2O + H(+). It catalyses the reaction dodecan-1-ol + reduced [NADPH--hemoprotein reductase] + O2 = 1,4-dodecanediol + oxidized [NADPH--hemoprotein reductase] + H2O + H(+). It carries out the reaction dodecan-1-ol + reduced [NADPH--hemoprotein reductase] + O2 = 1,6-dodecanediol + oxidized [NADPH--hemoprotein reductase] + H2O + H(+). Self-sufficient cytochrome P450 monooxygenase that catalyzes the regioselective in-chain hydroxylation of alkanes, fatty alcohols, and fatty acids at the omega-7 position. Performs hydroxylation of C10-C16 n-alkanes and C12 and C14 fatty alcohols; and thereby enables the one step biocatalytic synthesis of rare alcohols such as 5-dodecanol and 7-tetradecanol. Converts 1-dodecanol into 1,5-dodecanediol as major product with very little sub-terminally hydroxylated products with the 1,4-dodecanediol and 1,6-dodecanediol more abundant. Converts dodecanoic acid to 5-hydroxydodecanoic acid which can be further converted into delta-dodecalactone by lactonization of the 5-hydroxy acid at low pH. Also gives sub-terminal hydroxylation of dodecanoic acid with 9-hydroxydodecanoic acid being the second most abundant product. This Aspergillus kawachii (strain NBRC 4308) (White koji mold) protein is Self-sufficient cytochrome P450 monooxygenase CYP505E5.